The chain runs to 387 residues: Deoxyguanosinetriphosphate triphosphohydrolase-like protein (387 aa).

The region spanning 78–209 is the HD domain; it reads RLTHSLEVAQ…ANLADEVAYN (132 aa).

It belongs to the dGTPase family. Type 2 subfamily.

The polypeptide is Deoxyguanosinetriphosphate triphosphohydrolase-like protein (Ralstonia nicotianae (strain ATCC BAA-1114 / GMI1000) (Ralstonia solanacearum)).